Here is a 458-residue protein sequence, read N- to C-terminus: Argininosuccinate lyase (458 aa).

This sequence belongs to the lyase 1 family. Argininosuccinate lyase subfamily.

It is found in the cytoplasm. It carries out the reaction 2-(N(omega)-L-arginino)succinate = fumarate + L-arginine. It functions in the pathway amino-acid biosynthesis; L-arginine biosynthesis; L-arginine from L-ornithine and carbamoyl phosphate: step 3/3. The protein is Argininosuccinate lyase of Salmonella heidelberg (strain SL476).